We begin with the raw amino-acid sequence, 815 residues long: Probable inorganic carbon transporter subunit DabA (815 aa).

4 residues coordinate Zn(2+): Cys-334, Asp-336, His-507, and Cys-522.

Belongs to the inorganic carbon transporter (TC 9.A.2) DabA family. In terms of assembly, forms a complex with DabB. Zn(2+) serves as cofactor.

It localises to the cell inner membrane. Part of an energy-coupled inorganic carbon pump. This Ectopseudomonas mendocina (strain ymp) (Pseudomonas mendocina) protein is Probable inorganic carbon transporter subunit DabA.